Here is a 224-residue protein sequence, read N- to C-terminus: Elongation factor 1-beta (224 aa).

Belongs to the EF-1-beta/EF-1-delta family. EF-1 is composed of 4 subunits: alpha, beta (1B-alpha=beta'), delta (1B-beta), and gamma (1B-gamma).

EF-1-beta and EF-1-beta' stimulate the exchange of GDP bound to EF-1-alpha to GTP. The sequence is that of Elongation factor 1-beta from Oryza sativa subsp. japonica (Rice).